The sequence spans 241 residues: MATVSMRDMLKAGVHFGHQTRYWNPKMKPFIFGARNKVHIINLENTVPMFNDALAELGKIASRKGKILFVGTKRAASEAVKDSANNCDQFFVNHRWLGGMLTNWKTVRQSIKRLKDLEIQSQDGTFDKLTKKEALMRTRELDKLEKSLGGIKDMGGLPDALFVIDADHEHIAIKEANNLGIPVFAVVDTNSDPDGVDFIIPGNDDAIRAINLYLGAVATAVREGRSQDLAVQAEEGLVEAE.

The protein belongs to the universal ribosomal protein uS2 family.

The chain is Small ribosomal subunit protein uS2 from Pectobacterium atrosepticum (strain SCRI 1043 / ATCC BAA-672) (Erwinia carotovora subsp. atroseptica).